We begin with the raw amino-acid sequence, 321 residues long: Methionyl-tRNA formyltransferase (321 aa).

(6S)-5,6,7,8-tetrahydrofolate is bound at residue 112–115 (GLLP).

The protein belongs to the Fmt family.

The catalysed reaction is L-methionyl-tRNA(fMet) + (6R)-10-formyltetrahydrofolate = N-formyl-L-methionyl-tRNA(fMet) + (6S)-5,6,7,8-tetrahydrofolate + H(+). In terms of biological role, attaches a formyl group to the free amino group of methionyl-tRNA(fMet). The formyl group appears to play a dual role in the initiator identity of N-formylmethionyl-tRNA by promoting its recognition by IF2 and preventing the misappropriation of this tRNA by the elongation apparatus. This Chlamydia caviae (strain ATCC VR-813 / DSM 19441 / 03DC25 / GPIC) (Chlamydophila caviae) protein is Methionyl-tRNA formyltransferase.